We begin with the raw amino-acid sequence, 2172 residues long: DExH-box ATP-dependent RNA helicase DExH13 (2172 aa).

The interval 20–83 (YKVNSSLVLN…KSKKKKERCD (64 aa)) is disordered. Basic and acidic residues predominate over residues 30–73 (SDERRRDTHESSGEPESLRGRIDPKSFGDRVVRGRPHELDERLN). A Helicase ATP-binding 1 domain is found at 515 to 698 (GTALFKADNI…FLRVDLKNGL (184 aa)). An ATP-binding site is contributed by 528–535 (APTGAGKT). Residues 640 to 643 (DEIH) carry the DEIH box motif. The Helicase C-terminal 1 domain occupies 742–946 (GKHQVLIFVH…NAREACHWLG (205 aa)). The 302-residue stretch at 1007-1308 (TDLGRIASYY…KWLDSPTVLP (302 aa)) folds into the SEC63 1 domain. The Helicase ATP-binding 2 domain occupies 1361 to 1538 (TVLYNTSDNV…WIGASSCGVF (178 aa)). 1374–1381 (APTGSGKT) serves as a coordination point for ATP. The short motif at 1480-1483 (DELH) is the DELH box element. The Helicase C-terminal 2 domain occupies 1575-1772 (AIVQHAKNKK…NFNAEVVARV (198 aa)). Positions 1840-2157 (PLNLGMIASY…YLGCDQEYSF (318 aa)) constitute an SEC63 2 domain.

The protein resides in the nucleus. The enzyme catalyses ATP + H2O = ADP + phosphate + H(+). Functionally, RNA helicase that plays an essential role in pre-mRNA splicing as component of the U5 snRNP and U4/U6-U5 tri-snRNP complexes. Involved in spliceosome assembly, activation and disassembly. This chain is DExH-box ATP-dependent RNA helicase DExH13, found in Arabidopsis thaliana (Mouse-ear cress).